The primary structure comprises 920 residues: 2-oxoadipate dehydrogenase complex component E1 (920 aa).

N6-succinyllysine occurs at positions 183 and 188. The tract at residues 299-318 is disordered; the sequence is GKTRGRQQSQEDGDYSPNGS. An N6-succinyllysine mark is found at Lys800 and Lys818.

It belongs to the alpha-ketoglutarate dehydrogenase family. As to quaternary structure, the 2-oxoadipate dehydrogenase complex is composed of OADH (2-oxoadipate dehydrogenase; E1a), DLST (dihydrolipoamide succinyltransferase; E2) and DLD (dihydrolipoamide dehydrogenase; E3). E1a functional unit is a dimer. Thiamine diphosphate is required as a cofactor.

It is found in the mitochondrion. It catalyses the reaction N(6)-[(R)-lipoyl]-L-lysyl-[protein] + 2-oxoadipate + H(+) = N(6)-[(R)-S(8)-glutaryldihydrolipoyl]-L-lysyl-[protein] + CO2. It participates in amino-acid degradation. Its function is as follows. 2-oxoadipate dehydrogenase (E1a) component of the 2-oxoadipate dehydrogenase complex (OADHC). Participates in the first step, rate limiting for the overall conversion of 2-oxoadipate (alpha-ketoadipate) to glutaryl-CoA and CO(2) catalyzed by the whole OADHC. Catalyzes the irreversible decarboxylation of 2-oxoadipate via the thiamine diphosphate (ThDP) cofactor and subsequent transfer of the decarboxylated acyl intermediate on an oxidized dihydrolipoyl group that is covalently amidated to the E2 enzyme (dihydrolipoyllysine-residue succinyltransferase or DLST). Can catalyze the decarboxylation of 2-oxoglutarate in vitro, but at a much lower rate than 2-oxoadipate. Responsible for the last step of L-lysine, L-hydroxylysine and L-tryptophan catabolism with the common product being 2-oxoadipate. The chain is 2-oxoadipate dehydrogenase complex component E1 (Dhtkd1) from Rattus norvegicus (Rat).